Consider the following 185-residue polypeptide: Ribosome-recycling factor (185 aa).

The interval 140–168 (KKEQKDGNITEDEQRNLEKQVQKITDDST) is disordered.

Belongs to the RRF family.

The protein localises to the cytoplasm. Its function is as follows. Responsible for the release of ribosomes from messenger RNA at the termination of protein biosynthesis. May increase the efficiency of translation by recycling ribosomes from one round of translation to another. The chain is Ribosome-recycling factor from Lactobacillus helveticus (strain DPC 4571).